The following is a 156-amino-acid chain: Transcription elongation factor GreA (156 aa).

The stretch at 2 to 78 forms a coiled coil; sequence AKEIILTQEG…MISKAKLIED (77 aa).

The protein belongs to the GreA/GreB family.

Functionally, necessary for efficient RNA polymerase transcription elongation past template-encoded arresting sites. The arresting sites in DNA have the property of trapping a certain fraction of elongating RNA polymerases that pass through, resulting in locked ternary complexes. Cleavage of the nascent transcript by cleavage factors such as GreA or GreB allows the resumption of elongation from the new 3'terminus. GreA releases sequences of 2 to 3 nucleotides. The protein is Transcription elongation factor GreA of Mesoplasma florum (strain ATCC 33453 / NBRC 100688 / NCTC 11704 / L1) (Acholeplasma florum).